The following is a 25-amino-acid chain: Unknown protein 7 (25 aa).

Positions 1–25 (MENGKVHVASMSGLSMPHMNEMLEK) are disordered.

In Pseudotsuga menziesii (Douglas-fir), this protein is Unknown protein 7.